The chain runs to 146 residues: Angiogenin (146 aa).

A signal peptide spans 1-24; it reads MVMGLHLLFLVFILGLGLTPPTLA. Position 25 is a pyrrolidone carboxylic acid (glutamine 25). Histidine 37 (proton acceptor) is an active-site residue. 3 disulfide bridges follow: cysteine 50/cysteine 105, cysteine 63/cysteine 116, and cysteine 81/cysteine 131. The short motif at 55–59 is the Nucleolar localization signal element; that stretch reads RLRNM. TRNA is bound by residues cysteine 105 and valine 127. Catalysis depends on histidine 138, which acts as the Proton donor.

It belongs to the pancreatic ribonuclease family. In terms of assembly, homodimer. Interacts with RNH1; inhibiting ANG ribonuclease activity. Interacts with PCNA.

It localises to the secreted. The protein resides in the nucleus. The protein localises to the nucleolus. It is found in the cytoplasm. Its subcellular location is the stress granule. With respect to regulation, has weak tRNA ribonuclease activity by itself due to partial autoinhibition by its C-terminus, which folds into a short alpha-helix that partially occludes the substrate-binding site. In absence of stress, the ribonuclease activity is inhibited by RNH1 in the cytoplasm. In response to stress, dissociates from RNH1 in the cytoplasm and associates with cytoplasmic ribosomes with vacant A-sites: ribosomes directly activate the tRNA ribonuclease activity of ANG by refolding the C-terminal alpha-helix. In response to stress, the angiogenic activity of ANG is inhibited by RNH1 in the nucleus. Secreted ribonuclease that can either promote or restrict cell proliferation of target cells, depending on the context. Endocytosed in target cells via its receptor PLXNB2 and translocates to the cytoplasm or nucleus. Under stress conditions, localizes to the cytoplasm and promotes the assembly of stress granules (SGs): specifically cleaves a subset of tRNAs within anticodon loops to produce tRNA-derived stress-induced fragments (tiRNAs), resulting in translation repression and inhibition of cell proliferation. tiRNas also prevent formation of apoptosome, thereby promoting cell survival. Preferentially cleaves RNAs between a pyrimidine and an adenosine residue, suggesting that it cleaves the anticodon loop of tRNA(Ala) (32-UUAGCAU-38) after positions 33 and 36. Cleaves a subset of tRNAs, including tRNA(Ala), tRNA(Glu), tRNA(Gly), tRNA(Lys), tRNA(Val), tRNA(His), tRNA(Asp) and tRNA(Sec). Under growth conditions and in differentiated cells, translocates to the nucleus and stimulates ribosomal RNA (rRNA) transcription, including that containing the initiation site sequences of 45S rRNA, thereby promoting cell growth and proliferation. Angiogenin induces vascularization of normal and malignant tissues via its ability to promote rRNA transcription. Involved in hematopoietic stem and progenitor cell (HSPC) growth and survival by promoting rRNA transcription in growth conditions and inhibiting translation in response to stress, respectively. Mediates the crosstalk between myeloid and intestinal epithelial cells to protect the intestinal epithelial barrier integrity: secreted by myeloid cells and promotes intestinal epithelial cells proliferation and survival. Also mediates osteoclast-endothelial cell crosstalk in growing bone: produced by osteoclasts and protects the neighboring vascular cells against senescence by promoting rRNA transcription. In Saguinus oedipus (Cotton-top tamarin), this protein is Angiogenin (ANG).